Here is a 336-residue protein sequence, read N- to C-terminus: Protein REVEILLE 7-like (336 aa).

The HTH myb-type domain maps to 60–114 (TVTKQREKWSEEEHDRFLEAIKLYGRGWRQIQEHIGTKTAVQIRSHAQKFFSKMA). The H-T-H motif DNA-binding region spans 87–110 (WRQIQEHIGTKTAVQIRSHAQKFF). Residues 114-197 (AQEADSRSEG…KQPFKDDSDI (84 aa)) form a disordered region. Residues 134–144 (RPKRKPAHPYP) show a composition bias toward basic residues. The segment covering 145–158 (RKSPVPYTQSPPPN) has biased composition (pro residues). Residues 167 to 189 (KSPTSVLSSFGSEDQNNYTTSKQ) are compositionally biased toward polar residues.

Its subcellular location is the nucleus. Functionally, probable transcription factor. This chain is Protein REVEILLE 7-like (RVE7L), found in Arabidopsis thaliana (Mouse-ear cress).